The sequence spans 449 residues: Biotin carboxylase (449 aa).

A Biotin carboxylation domain is found at 1 to 445; that stretch reads MLEKVLIANR…NIHYLEKKLG (445 aa). ATP is bound by residues K116, K159, 165–166, 201–204, H209, and H236; these read GG and EKFL. Residues 120–317 enclose the ATP-grasp domain; sequence KDAMKRAGVP…IVKEMLRIAS (198 aa). Position 238 (K238) interacts with hydrogencarbonate. ATP-binding residues include E276 and E288. E276, E288, and N290 together coordinate Mg(2+). E276, E288, and N290 together coordinate Mn(2+). The hydrogencarbonate site is built by R292, V295, and R338. R292 is a catalytic residue. R338 provides a ligand contact to biotin.

Acetyl-CoA carboxylase is a heterohexamer of biotin carboxyl carrier protein, biotin carboxylase and the two subunits of carboxyl transferase in a 2:2 complex. Requires Mg(2+) as cofactor. It depends on Mn(2+) as a cofactor.

It catalyses the reaction N(6)-biotinyl-L-lysyl-[protein] + hydrogencarbonate + ATP = N(6)-carboxybiotinyl-L-lysyl-[protein] + ADP + phosphate + H(+). The protein operates within lipid metabolism; malonyl-CoA biosynthesis; malonyl-CoA from acetyl-CoA: step 1/1. In terms of biological role, this protein is a component of the acetyl coenzyme A carboxylase complex; first, biotin carboxylase catalyzes the carboxylation of the carrier protein and then the transcarboxylase transfers the carboxyl group to form malonyl-CoA. In Pseudomonas aeruginosa (strain ATCC 15692 / DSM 22644 / CIP 104116 / JCM 14847 / LMG 12228 / 1C / PRS 101 / PAO1), this protein is Biotin carboxylase (accC).